Consider the following 587-residue polypeptide: Lipoprotein LpqB (587 aa).

Positions 1–19 (MERLMRLTILLFLGAVLAG) are cleaved as a signal peptide. Residue Cys20 is the site of N-palmitoyl cysteine attachment. A lipid anchor (S-diacylglycerol cysteine) is attached at Cys20.

It belongs to the LpqB lipoprotein family.

The protein resides in the cell membrane. This Mycobacterium bovis (strain ATCC BAA-935 / AF2122/97) protein is Lipoprotein LpqB.